A 222-amino-acid chain; its full sequence is Putative germin-like protein subfamily 1 member 9 (222 aa).

An N-terminal signal peptide occupies residues 1–22 (MKSFSFLAVLSILAITLSLSKA). An intrachain disulfide couples Cys-32 to Cys-49. The region spanning 63–213 (TGLHEARPPN…AFQVDPKIVM (151 aa)) is the Cupin type-1 domain. Asn-78 carries an N-linked (GlcNAc...) asparagine glycan. His-111, His-113, Glu-118, and His-159 together coordinate Mn(2+).

The protein belongs to the germin family. Oligomer (believed to be a pentamer but probably hexamer).

Its subcellular location is the secreted. It is found in the extracellular space. The protein resides in the apoplast. Functionally, may play a role in plant defense. Probably has no oxalate oxidase activity even if the active site is conserved. The polypeptide is Putative germin-like protein subfamily 1 member 9 (Arabidopsis thaliana (Mouse-ear cress)).